The following is a 796-amino-acid chain: Endonuclease MutS2 (796 aa).

Residue 339 to 346 participates in ATP binding; sequence GPNTGGKT. The interval 620–644 is disordered; that stretch reads EKLGDTDSSLVSKAKKNRKQHKPSD. One can recognise a Smr domain in the interval 721–796; sequence LNIIGKRVDE…DHGVTIVEFK (76 aa).

It belongs to the DNA mismatch repair MutS family. MutS2 subfamily. As to quaternary structure, homodimer. Binds to stalled ribosomes, contacting rRNA.

Its function is as follows. Endonuclease that is involved in the suppression of homologous recombination and thus may have a key role in the control of bacterial genetic diversity. Acts as a ribosome collision sensor, splitting the ribosome into its 2 subunits. Detects stalled/collided 70S ribosomes which it binds and splits by an ATP-hydrolysis driven conformational change. Acts upstream of the ribosome quality control system (RQC), a ribosome-associated complex that mediates the extraction of incompletely synthesized nascent chains from stalled ribosomes and their subsequent degradation. Probably generates substrates for RQC. The protein is Endonuclease MutS2 of Lachnoclostridium phytofermentans (strain ATCC 700394 / DSM 18823 / ISDg) (Clostridium phytofermentans).